Consider the following 419-residue polypeptide: Synaptotagmin-2 (419 aa).

The Vesicular portion of the chain corresponds to 1–62 (MRNIFKRNQE…NEINKIPLPP (62 aa)). A disordered region spans residues 16–39 (ATTTATMPIGPVDNSTESGGAGES). Asn-29 carries N-linked (GlcNAc...) asparagine glycosylation. The chain crosses the membrane as a helical span at residues 63-83 (WALIAIAVVAGLLLLTCCFCI). Residues 84–419 (CKKCCCKKKK…EVDALLGKNK (336 aa)) lie on the Cytoplasmic side of the membrane. The segment at 99 to 138 (GKGMKNAMNMKDMKGGQDDDDAETGLTEGEGEGEEEKEPE) is disordered. Positions 116–136 (DDDDAETGLTEGEGEGEEEKE) are enriched in acidic residues. Residues Thr-122 and Thr-125 each carry the phosphothreonine modification. The segment at 133–379 (EEKEPENLGK…AIGKIFVGSN (247 aa)) is phospholipid binding. 2 C2 domains span residues 139–258 (NLGK…EEWR) and 270–403 (KLGD…AQWH). Positions 169, 170, and 176 each coordinate Ca(2+). A Phosphothreonine modification is found at Thr-199. Tyr-227 is subject to Phosphotyrosine. Asp-228, Phe-229, Asp-230, Ser-233, Lys-234, Asp-236, Asp-301, Asp-307, Asp-361, and Asp-363 together coordinate Ca(2+). Position 383 is a phosphothreonine (Thr-383).

The protein belongs to the synaptotagmin family. Homotetramer. Heterodimer; heterodimerizes with SYT1 in presence of calcium. Interacts with STON2. Interacts with SCAMP5. Interacts with PRRT2. Ca(2+) is required as a cofactor. In terms of processing, phosphorylation at Thr-199 by WNK1, changes the calcium requirement for SYT2-binding to phospholipid membranes. Expressed at the neuromuscular junction. Expressed in melanocytes.

The protein localises to the cytoplasmic vesicle. It localises to the secretory vesicle. Its subcellular location is the synaptic vesicle membrane. The protein resides in the chromaffin granule membrane. It is found in the cytoplasm. Functionally, exhibits calcium-dependent phospholipid and inositol polyphosphate binding properties. May have a regulatory role in the membrane interactions during trafficking of synaptic vesicles at the active zone of the synapse. Plays a role in dendrite formation by melanocytes. The polypeptide is Synaptotagmin-2 (Homo sapiens (Human)).